The sequence spans 450 residues: tRNA modification GTPase MnmE (450 aa).

Arg-20, Glu-78, and Lys-117 together coordinate (6S)-5-formyl-5,6,7,8-tetrahydrofolate. Residues 211-372 (GFRMVIVGKP…LEEAIYRETQ (162 aa)) form the TrmE-type G domain. Asn-221 serves as a coordination point for K(+). GTP is bound by residues 221–226 (NVGKST), 240–246 (TDIPGTT), and 265–268 (DTAG). Ser-225 serves as a coordination point for Mg(2+). 3 residues coordinate K(+): Thr-240, Ile-242, and Thr-245. A Mg(2+)-binding site is contributed by Thr-246. Lys-450 is a binding site for (6S)-5-formyl-5,6,7,8-tetrahydrofolate.

Belongs to the TRAFAC class TrmE-Era-EngA-EngB-Septin-like GTPase superfamily. TrmE GTPase family. As to quaternary structure, homodimer. Heterotetramer of two MnmE and two MnmG subunits. The cofactor is K(+).

The protein resides in the cytoplasm. Its function is as follows. Exhibits a very high intrinsic GTPase hydrolysis rate. Involved in the addition of a carboxymethylaminomethyl (cmnm) group at the wobble position (U34) of certain tRNAs, forming tRNA-cmnm(5)s(2)U34. This is tRNA modification GTPase MnmE from Thermotoga petrophila (strain ATCC BAA-488 / DSM 13995 / JCM 10881 / RKU-1).